A 244-amino-acid chain; its full sequence is 5'-nucleotidase SurE (244 aa).

4 residues coordinate a divalent metal cation: Asp-8, Asp-9, Ser-39, and Asn-96.

This sequence belongs to the SurE nucleotidase family. It depends on a divalent metal cation as a cofactor.

It is found in the cytoplasm. It catalyses the reaction a ribonucleoside 5'-phosphate + H2O = a ribonucleoside + phosphate. Its function is as follows. Nucleotidase that shows phosphatase activity on nucleoside 5'-monophosphates. The protein is 5'-nucleotidase SurE of Thermus thermophilus (strain ATCC 27634 / DSM 579 / HB8).